The chain runs to 196 residues: MHAQNVDIAPGSTSTVSIIVGIDPGLESTGYGVIEAGGGSLRCLTYGVIVTQSNQPSAARLRHIFDTLQQVISIYQPQYCAVETIYFAKNVTSALCVAQARGVVLLAMAQQHISVAEYAPNAIKKAITGIAQAEKRQVQHLVKILLNLKDIPHPDHAADALAVAVTHVHCCMSSNYAVGSTRSRGAYVTLYKKGKR.

Residues aspartate 23, glutamate 83, and histidine 156 contribute to the active site. Mg(2+) contacts are provided by aspartate 23, glutamate 83, and histidine 156.

The protein belongs to the RuvC family. In terms of assembly, homodimer which binds Holliday junction (HJ) DNA. The HJ becomes 2-fold symmetrical on binding to RuvC with unstacked arms; it has a different conformation from HJ DNA in complex with RuvA. In the full resolvosome a probable DNA-RuvA(4)-RuvB(12)-RuvC(2) complex forms which resolves the HJ. It depends on Mg(2+) as a cofactor.

The protein localises to the cytoplasm. It catalyses the reaction Endonucleolytic cleavage at a junction such as a reciprocal single-stranded crossover between two homologous DNA duplexes (Holliday junction).. Functionally, the RuvA-RuvB-RuvC complex processes Holliday junction (HJ) DNA during genetic recombination and DNA repair. Endonuclease that resolves HJ intermediates. Cleaves cruciform DNA by making single-stranded nicks across the HJ at symmetrical positions within the homologous arms, yielding a 5'-phosphate and a 3'-hydroxyl group; requires a central core of homology in the junction. The consensus cleavage sequence is 5'-(A/T)TT(C/G)-3'. Cleavage occurs on the 3'-side of the TT dinucleotide at the point of strand exchange. HJ branch migration catalyzed by RuvA-RuvB allows RuvC to scan DNA until it finds its consensus sequence, where it cleaves and resolves the cruciform DNA. The chain is Crossover junction endodeoxyribonuclease RuvC from Treponema pallidum (strain Nichols).